Here is a 1026-residue protein sequence, read N- to C-terminus: MIKNTAKNKNGIITRATIDLKKDLKFVKLTAVSNLAVQNGEMLAAVTEKLLVHYSEGTGERHQEMSLPLNGPDHVAYIHLSRTGFHAIVSSKLGHNFYIHLKSNAFHHLKKLRCVVTAVGWNPDYSKETDTTGPILLGTAQGSIIELNVGSTGMMTTLKELTSQVAQIAEQRITSAPSPAAAITDIQLFQLADDDPKNKKWMVIIAQMARLIVLITDNEPAPVVKLGGFTSSASLQAGLMNLATEQAPSTTFHSFFTSPNTLQHTISSSKFSEKFKNHGFLTMHPTIAEPKRYAWLSPDGISIGNVNIYAERIQDVLVEEFNIEHRLIEGRLEPPTGIALTDYHVLLAYSSRVLALSLLPPHDVIFEDPWNPELGGALGFVSDNVAEFVWLYTQTFAMKYGTNDEARYIWKTYLDRGEYQKALQIARTRVAIEPDALEMVLRKQADFYIQEKNFTAAAEILAQSSEPFESVVLKFLTNSSERKMGLKTLLDKKLERLTRHEDKIRRDALVMWLLNVQLEELAEMRRLKNSNPDPAFVEKLRDTTDHVQRYFMRKNVIESIQTNRDAVYRMCVAHADFEMQLFFANAVKDLRTVIDILMLREQYFEVLEVLKNQRISELTYEMCPLLIEHIPKQVIVYLIQNQDQISPQKLTPCLSLCVKNMEMAIPAIKYLEAQFKGTQTISQNPQNLANLHNIYIHLMAKFRREKLLGYLESHGTIRSDLPYELDFAMRTCEQFKIEPCVVYLFCVAGMFGDAVEKALGFDVDLAKKCALMMEEAEANFAWLEGMEDPAATSYIRQKLDEKAKKAIWLKIGQYYVTQENNVDKCIELINESNHLLTIQDLLPIIPKFTRVGALKPIIVDFLKRNKQRLEKLERSMKEATEIASEIRDKQEKLKNRTTVVKPSDVCSHCARPISGRAFNVHSCRHFFHRECLEIAMISFLSQEEVEKMKTLIIDEERVLSQMKAEQLAGNQKGFIEKQEKYLKIAAFISNIVGAECPLCGNIAISQIDKQFLSDEEFAADLNTWLL.

Positions Ile-858–Arg-896 form a coiled coil. The RING-type; degenerate zinc-finger motif lies at Cys-906–Leu-932.

Probable core component of at least two putative endosomal tethering complexes, the homotypic fusion and vacuole protein sorting (HOPS) complex and the class C core vacuole/endosome tethering (CORVET) complex. Their common core is composed of the class C Vps proteins vps-11, vps-16 and vps-18, which in HOPS further associates with vps-33.1, vps-39 and vps-41 and in CORVET with vps-8 and vps-33.2. In hermaphrodites, expressed in coelomocytes and gonadal sheath cells.

Its subcellular location is the cytoplasm. The protein resides in the late endosome membrane. It localises to the lysosome membrane. The protein localises to the early endosome. It is found in the cytoplasmic vesicle. Its subcellular location is the autophagosome. The protein resides in the clathrin-coated vesicle. Plays a role in vesicle-mediated protein trafficking to lysosomal compartments including the endocytic membrane transport and autophagic pathways. Believed to act as a core component of the putative HOPS and CORVET endosomal tethering complexes which are proposed to be involved in the rab-5-to-rab-7 endosome conversion probably implicating sand-1, and via binding SNAREs and SNARE complexes to mediate tethering and docking events during SNARE-mediated membrane fusion. The HOPS complex is proposed to be recruited to rab-7 on the late endosomal membrane and to regulate late endocytic, phagocytic and autophagic traffic towards lysosomes. Within the HOPS complex, contributes to the normal development of gut granules in intestinal cells of the embryo, and also promotes the trafficking of embryonic intestinal gut granules away from lysosomes. The CORVET complex is proposed to function as a rab-5 effector to mediate early endosome fusion probably in specific endosome subpopulations. Required for fusion of endosomes and autophagosomes with lysosomes. Plays a role in the degradation of apoptotic cells during programmed cell death. This is Vacuolar protein sorting-associated protein 18 homolog from Caenorhabditis elegans.